Here is a 146-residue protein sequence, read N- to C-terminus: Ribosome maturation factor RimP (146 aa).

The protein belongs to the RimP family.

Its subcellular location is the cytoplasm. Functionally, required for maturation of 30S ribosomal subunits. In Dechloromonas aromatica (strain RCB), this protein is Ribosome maturation factor RimP.